A 63-amino-acid polypeptide reads, in one-letter code: Large ribosomal subunit protein bL28 (63 aa).

Belongs to the bacterial ribosomal protein bL28 family.

This chain is Large ribosomal subunit protein bL28, found in Petrotoga mobilis (strain DSM 10674 / SJ95).